Here is a 200-residue protein sequence, read N- to C-terminus: MIQYPEPLAKLIESYTKLPGIGQKTATRLAFYTLSMQEDDVTNFAKSLLSAKRDLHNCSICGNITEDDPCPICRDKTRDHSQILVVEQSQDVMAMERMHEYHGLYHVLHGVISPVAGTGPEDINITSLLKRLKKDDEVKEIIIATNASSDGELTAGYLAKLIKPAGIKVTRLAHGLSVGADIDYADEMTLFKAVQGRTEM.

The C4-type zinc-finger motif lies at 58 to 73 (CSICGNITEDDPCPIC). Residues 81 to 177 (SQILVVEQSQ…KVTRLAHGLS (97 aa)) enclose the Toprim domain.

It belongs to the RecR family.

May play a role in DNA repair. It seems to be involved in an RecBC-independent recombinational process of DNA repair. It may act with RecF and RecO. In Limosilactobacillus reuteri (strain DSM 20016) (Lactobacillus reuteri), this protein is Recombination protein RecR.